The primary structure comprises 597 residues: K(+) efflux antiporter 6 (597 aa).

The first 35 residues, 1-35 (MVEGRRRRRFSLSSQQLALLLLLLSFFLCFSVASP), serve as a signal peptide directing secretion. 12 consecutive transmembrane segments (helical) span residues 177-197 (LISDLVVVIVSATCGGIAFAC), 201-221 (PVITGYLLAGSIIGPGGLNFI), 224-244 (MVQVETVAQFGVVFLLFALGL), 257-277 (VAVLGGLLQILLFMFLCGITV), 287-307 (GVFVGAFLSMSSTAVVLKFLM), 321-341 (IGILILQDCAVGLLFALLPVL), 351-371 (MLSIGKVVVLLLSFLAVLSIL), 396-416 (LAAVAFCLLVAWCSDKLGLSL), 440-460 (IEPIRNLFAALFLASIGMLVN), 461-481 (VHFLWTHVDILLASVILVIII), 499-519 (TALLVGISLAQIGEFAFVLLS), and 543-563 (LVTTPLVFKMIPAVVHLGILL).

The protein belongs to the monovalent cation:proton antiporter 2 (CPA2) transporter (TC 2.A.37) family. KEA (TC 2.A.37.1) subfamily. As to expression, expressed in roots, stems, leaves, flowers and silique.

The protein resides in the golgi apparatus membrane. It is found in the golgi apparatus. Its subcellular location is the trans-Golgi network membrane. The protein localises to the prevacuolar compartment membrane. It localises to the endomembrane system. It catalyses the reaction K(+)(in) + H(+)(out) = K(+)(out) + H(+)(in). Its function is as follows. Electroneutral K(+)/H(+) efflux antiporter involved in K(+) homeostasis and osmotic adjustment. Together with KEA4 and KEA5, promotes growth and development, and facilitates endosomal pH and ions homeostasis, as well as salt tolerance (e.g. K(+), NaCl and LiCl), probably by supporting cell wall biosynthesis during rapid etiolated seedling growth. In Arabidopsis thaliana (Mouse-ear cress), this protein is K(+) efflux antiporter 6.